Here is a 293-residue protein sequence, read N- to C-terminus: Cep170-like protein (293 aa).

Disordered stretches follow at residues 78-110 (PPLV…LTIT) and 217-270 (FPSA…AESE). A compositionally biased stretch (polar residues) spans 227–245 (KQKSSPVNNHHSPGQTPTL).

This sequence belongs to the CEP170 family.

The polypeptide is Cep170-like protein (CEP170P1) (Homo sapiens (Human)).